We begin with the raw amino-acid sequence, 350 residues long: Hepatocyte nuclear factor 3-gamma (350 aa).

The fork-head DNA-binding region spans 116–207; that stretch reads AKPPYSYISL…GNMFENGCYL (92 aa). The tract at residues 217–276 is disordered; it reads EKVKKGGSGAATTTRNGTGSAASTTTPAATVTSPPQPPPPAPEPEAQGGEDVGALDCGSP. Low complexity predominate over residues 226-249; sequence AATTTRNGTGSAASTTTPAATVTS. The segment covering 250-259 has biased composition (pro residues); it reads PPQPPPPAPE.

Interacts with FOXA2. In terms of tissue distribution, expressed in erythroleukemia and hepatoma cell lines and in liver and pancreas. Not expressed in any other cell lines or tissues examined.

The protein localises to the nucleus. Functionally, transcription factor that is thought to act as a 'pioneer' factor opening the compacted chromatin for other proteins through interactions with nucleosomal core histones and thereby replacing linker histones at target enhancer and/or promoter sites. Originally described as a transcription activator for a number of liver genes such as AFP, albumin, tyrosine aminotransferase, PEPCK, etc. Interacts with the cis-acting regulatory regions of these genes. Involved in glucose homeostasis; binds to and activates transcription from the G6PC1 promoter. Binds to the CYP3A4 promoter and activates its transcription in cooperation with CEBPA. Binds to the CYP3A7 promoter together with members of the CTF/NF-I family. Involved in regulation of neuronal-specific transcription. May be involved in regulation of spermatogenesis. This chain is Hepatocyte nuclear factor 3-gamma (FOXA3), found in Homo sapiens (Human).